Consider the following 218-residue polypeptide: Tubulin polymerization-promoting protein (218 aa).

Positions 1 to 46 (MADSKAKPAKAANKTPPKSPGDPARAAKRLSLESEGANEGATAAPE) are disordered. A mediates interaction with LIMK1 region spans residues 1–115 (MADSKAKPAK…SCRTITFEQF (115 aa)). Position 15 is a phosphothreonine (T15). S19, S31, and S34 each carry phosphoserine. Phosphothreonine is present on T42. Zn(2+)-binding residues include H60, H71, C79, and C82. At T91 the chain carries Phosphothreonine. S106 bears the Phosphoserine mark. A glycan (O-linked (GlcNAc) serine) is linked at S151. Phosphoserine is present on residues S158 and S159. Residues 166–192 (TDTSKFTGSHKERFDQSGKGKGKAGRV) are disordered. Residues 174–183 (SHKERFDQSG) show a composition bias toward basic and acidic residues.

Belongs to the TPPP family. As to quaternary structure, homodimer. Binds tubulin; binding is inhibited by GTP. Interacts with MAPK1. Interacts with GAPDH; the interaction is direct. Interacts with LIMK1 (via the PDZ domain); the interaction is direct. Interacts with LIMK2. Interacts with HDAC6; thereby inhibiting the tubulin deacetylase activity of HDAC6. Interacts with aggregated SNCA; may have a pro-aggregatory role in synucleinopathies. Interacts with DYNLL1. Interacts (via C-terminus) with S100A2, S100A6 and S100B; these interactions inhibit TPPP dimerization. It depends on Mg(2+) as a cofactor. Phosphorylated by LIMK1 on serine residues; phosphorylation may alter the tubulin polymerization activity. Phosphorylation by LIMK2, but not LIMK1, regulates astral microtubule organization at early stage of mitosis. Phosphorylation by ROCK1 at Ser-31, Ser-106 and Ser-158 inhibits interaction with HDAC6, resulting in decreased acetylation of tubulin, increased cell motility and entry into S-phase. Phosphorylation by CDK1 inhibits the microtubule polymerizing activity. Post-translationally, degraded by the proteasome; zinc-binding inhibits degradation by the proteasome. Widely expressed with higher expression in brain (at protein level).

It is found in the golgi outpost. It localises to the cytoplasm. The protein localises to the cytoskeleton. The protein resides in the microtubule organizing center. Its subcellular location is the nucleus. It is found in the spindle. It catalyses the reaction GTP + H2O = GDP + phosphate + H(+). In terms of biological role, regulator of microtubule dynamics that plays a key role in myelination by promoting elongation of the myelin sheath. Acts as a microtubule nucleation factor in oligodendrocytes: specifically localizes to the postsynaptic Golgi apparatus region, also named Golgi outpost, and promotes microtubule nucleation, an important step for elongation of the myelin sheath. Required for both uniform polarized growth of distal microtubules as well as directing the branching of proximal processes. Shows magnesium-dependent GTPase activity; the role of the GTPase activity is unclear. In addition to microtubule nucleation activity, also involved in microtubule bundling and stabilization of existing microtubules, thereby maintaining the integrity of the microtubule network. Regulates microtubule dynamics by promoting tubulin acetylation: acts by inhibiting the tubulin deacetylase activity of HDAC6. Also regulates cell migration: phosphorylation by ROCK1 inhibits interaction with HDAC6, resulting in decreased acetylation of tubulin and increased cell motility. Plays a role in cell proliferation by regulating the G1/S-phase transition. Involved in astral microtubule organization and mitotic spindle orientation during early stage of mitosis; this process is regulated by phosphorylation by LIMK2. The protein is Tubulin polymerization-promoting protein of Mus musculus (Mouse).